Reading from the N-terminus, the 249-residue chain is Aspartate/glutamate leucyltransferase (249 aa).

Belongs to the R-transferase family. Bpt subfamily.

The protein localises to the cytoplasm. The catalysed reaction is N-terminal L-glutamyl-[protein] + L-leucyl-tRNA(Leu) = N-terminal L-leucyl-L-glutamyl-[protein] + tRNA(Leu) + H(+). The enzyme catalyses N-terminal L-aspartyl-[protein] + L-leucyl-tRNA(Leu) = N-terminal L-leucyl-L-aspartyl-[protein] + tRNA(Leu) + H(+). Functionally, functions in the N-end rule pathway of protein degradation where it conjugates Leu from its aminoacyl-tRNA to the N-termini of proteins containing an N-terminal aspartate or glutamate. This Brucella suis (strain ATCC 23445 / NCTC 10510) protein is Aspartate/glutamate leucyltransferase.